We begin with the raw amino-acid sequence, 84 residues long: Putative membrane protein insertion efficiency factor (84 aa).

The disordered stretch occupies residues 63 to 84 (LGGSGYDPPPPPKTPRKWKCEE).

It belongs to the UPF0161 family.

It is found in the cell inner membrane. In terms of biological role, could be involved in insertion of integral membrane proteins into the membrane. The polypeptide is Putative membrane protein insertion efficiency factor (Caulobacter sp. (strain K31)).